The following is a 165-amino-acid chain: MTPQPPLSAAGLPYRQGVGIMLINARGQVFVARRLDSPEAWQMPQGGIDAGEDPETAAWREMEEEIGTRNALLLGETAGWLGYDLPEELRGRLWGGRFQGQRQKWFAFRFTGQDADINLATAHPEFDAWRWVDVDTLVALIVPFKRPVYEQVVAELAGFAVPQPA.

Residues 13–154 (PYRQGVGIML…KRPVYEQVVA (142 aa)) enclose the Nudix hydrolase domain. A Nudix box motif is present at residues 46-67 (GGIDAGEDPETAAWREMEEEIG).

This sequence belongs to the Nudix hydrolase family. RppH subfamily. It depends on a divalent metal cation as a cofactor.

Functionally, accelerates the degradation of transcripts by removing pyrophosphate from the 5'-end of triphosphorylated RNA, leading to a more labile monophosphorylated state that can stimulate subsequent ribonuclease cleavage. The sequence is that of RNA pyrophosphohydrolase from Rhodospirillum rubrum (strain ATCC 11170 / ATH 1.1.1 / DSM 467 / LMG 4362 / NCIMB 8255 / S1).